The sequence spans 299 residues: Oxygen-dependent coproporphyrinogen-III oxidase (299 aa).

Serine 92 provides a ligand contact to substrate. 2 residues coordinate a divalent metal cation: histidine 96 and histidine 106. Histidine 106 serves as the catalytic Proton donor. 108 to 110 provides a ligand contact to substrate; sequence NVR. A divalent metal cation is bound by residues histidine 145 and histidine 175. Positions 239 to 274 are important for dimerization; the sequence is YVEFNLVYDRGTLFGLQSGGRAESILMSLPPRVRWE. 257-259 contacts substrate; it reads GGR.

It belongs to the aerobic coproporphyrinogen-III oxidase family. As to quaternary structure, homodimer. The cofactor is a divalent metal cation.

The protein resides in the cytoplasm. The catalysed reaction is coproporphyrinogen III + O2 + 2 H(+) = protoporphyrinogen IX + 2 CO2 + 2 H2O. It participates in porphyrin-containing compound metabolism; protoporphyrin-IX biosynthesis; protoporphyrinogen-IX from coproporphyrinogen-III (O2 route): step 1/1. In terms of biological role, involved in the heme biosynthesis. Catalyzes the aerobic oxidative decarboxylation of propionate groups of rings A and B of coproporphyrinogen-III to yield the vinyl groups in protoporphyrinogen-IX. This chain is Oxygen-dependent coproporphyrinogen-III oxidase, found in Xanthomonas oryzae pv. oryzae (strain MAFF 311018).